The chain runs to 747 residues: Pyrin (747 aa).

The Pyrin domain maps to methionine 1–proline 92. The segment at alanine 89–arginine 181 is disordered. Positions proline 122–aspartate 135 are enriched in acidic residues. The Zn(2+) site is built by cysteine 442, histidine 445, cysteine 465, and histidine 471. A B box-type zinc finger spans residues cysteine 442–isoleucine 479. Residues isoleucine 479–lysine 508 adopt a coiled-coil conformation. The required for homotrimerization and induction of pyroptosomes stretch occupies residues lysine 487–methionine 645. The interval glutamate 698–glutamine 720 is disordered.

Homotrimer. Interacts (via the B box-type zinc finger) with PSTPIP1. Interacts (via the B30.2/SPRY domain) with several components of the inflammasome complex, including CASP1 p20 and p10 subunits, CASP5, PYCARD, NLRP1, NLRP2 and NLRP3, as well as with unprocessed IL1B; this interaction may lead to autophagic degradation of these proteins. Component of the AIM2 PANoptosome complex, a multiprotein complex that drives inflammatory cell death (PANoptosis). Interacts with NFKBIA and RELA. Interacts weakly with VASP and ACTR3. Interacts with active ULK1 (phosphorylated on 'Ser-317') and BECN1 simultaneously. Also interacts with ATG16L1 (via WD repeats), and with ATG8 family members, including GABARAP, GABARAPL1 and, to a lesser extent, GABARAPL2, MAP1LC3A/LC3A and MAP1LC3C/LC3C. Interacts with TRIM21. Interacts with YWHAB, YWHAE, YWHAG, YWHAH, YWHAQ and YWHAZ; the interaction is required for the down-regulation of pyrin pro-inflammatory activity. In terms of processing, degraded along with the delivery of its substrates to autolysosomal compartments (at protein level). In terms of tissue distribution, expressed in spleen and, to a lesser degree in the lung. Not expressed in thymus, testis, ovary, heart, brain, liver, kidney and muscle.

Its subcellular location is the cytoplasm. It localises to the cytoskeleton. It is found in the cell projection. The protein resides in the ruffle. The protein localises to the lamellipodium. Its subcellular location is the cytoplasmic vesicle. It localises to the autophagosome. It is found in the nucleus. Functionally, involved in the regulation of innate immunity and the inflammatory response in response to IFNG/IFN-gamma. Organizes autophagic machinery by serving as a platform for the assembly of ULK1, Beclin 1/BECN1, ATG16L1, and ATG8 family members and recognizes specific autophagy targets, thus coordinating target recognition with assembly of the autophagic apparatus and initiation of autophagy. Acts as an autophagy receptor for the degradation of several inflammasome components, including CASP1, NLRP1 and NLRP3, hence preventing excessive IL1B- and IL18-mediated inflammation. However, it can also have a positive effect in the inflammatory pathway, acting as an innate immune sensor that triggers PYCARD/ASC specks formation, caspase-1 activation, and IL1B and IL18 production. Together with AIM2, also acts as a mediator of pyroptosis, necroptosis and apoptosis (PANoptosis), an integral part of host defense against pathogens, in response to bacterial infection. It is required for PSTPIP1-induced PYCARD/ASC oligomerization and inflammasome formation. Recruits PSTPIP1 to inflammasomes, and is required for PSTPIP1 oligomerization. The polypeptide is Pyrin (Rattus norvegicus (Rat)).